The chain runs to 188 residues: ATP-dependent protease subunit HslV (188 aa).

Residue Thr8 is part of the active site. Ala165, Cys168, and Thr171 together coordinate Na(+).

Belongs to the peptidase T1B family. HslV subfamily. As to quaternary structure, a double ring-shaped homohexamer of HslV is capped on each side by a ring-shaped HslU homohexamer. The assembly of the HslU/HslV complex is dependent on binding of ATP.

It is found in the cytoplasm. It carries out the reaction ATP-dependent cleavage of peptide bonds with broad specificity.. With respect to regulation, allosterically activated by HslU binding. Protease subunit of a proteasome-like degradation complex believed to be a general protein degrading machinery. The protein is ATP-dependent protease subunit HslV of Neorickettsia sennetsu (strain ATCC VR-367 / Miyayama) (Ehrlichia sennetsu).